The chain runs to 204 residues: ATP synthase subunit b 2 (204 aa).

The segment at 8-28 (AQSSTTEGAEAHDAAAAGEVH) is disordered. A helical membrane pass occupies residues 56 to 76 (LLWLAITFGLFYLLMSKVIIP).

It belongs to the ATPase B chain family. As to quaternary structure, F-type ATPases have 2 components, F(1) - the catalytic core - and F(0) - the membrane proton channel. F(1) has five subunits: alpha(3), beta(3), gamma(1), delta(1), epsilon(1). F(0) has three main subunits: a(1), b(2) and c(10-14). The alpha and beta chains form an alternating ring which encloses part of the gamma chain. F(1) is attached to F(0) by a central stalk formed by the gamma and epsilon chains, while a peripheral stalk is formed by the delta and b chains.

Its subcellular location is the cell inner membrane. In terms of biological role, f(1)F(0) ATP synthase produces ATP from ADP in the presence of a proton or sodium gradient. F-type ATPases consist of two structural domains, F(1) containing the extramembraneous catalytic core and F(0) containing the membrane proton channel, linked together by a central stalk and a peripheral stalk. During catalysis, ATP synthesis in the catalytic domain of F(1) is coupled via a rotary mechanism of the central stalk subunits to proton translocation. Functionally, component of the F(0) channel, it forms part of the peripheral stalk, linking F(1) to F(0). The b'-subunit is a diverged and duplicated form of b found in plants and photosynthetic bacteria. This Rhizobium meliloti (strain 1021) (Ensifer meliloti) protein is ATP synthase subunit b 2 (atpF2).